A 142-amino-acid chain; its full sequence is Large ribosomal subunit protein uL11 (142 aa).

Belongs to the universal ribosomal protein uL11 family. As to quaternary structure, part of the ribosomal stalk of the 50S ribosomal subunit. Interacts with L10 and the large rRNA to form the base of the stalk. L10 forms an elongated spine to which L12 dimers bind in a sequential fashion forming a multimeric L10(L12)X complex. In terms of processing, one or more lysine residues are methylated.

In terms of biological role, forms part of the ribosomal stalk which helps the ribosome interact with GTP-bound translation factors. The protein is Large ribosomal subunit protein uL11 of Buchnera aphidicola subsp. Acyrthosiphon pisum (strain APS) (Acyrthosiphon pisum symbiotic bacterium).